The sequence spans 337 residues: Molybdate import system permease protein MolB (337 aa).

The Cytoplasmic segment spans residues methionine 1 to serine 5. A helical transmembrane segment spans residues tyrosine 6–leucine 25. At glycine 26–aspartate 51 the chain is on the periplasmic side. Residues proline 52–phenylalanine 87 form a helical membrane-spanning segment. Residues arginine 88–glycine 98 are Cytoplasmic-facing. Residues valine 99–phenylalanine 113 form a helical membrane-spanning segment. At glycine 114–serine 116 the chain is on the periplasmic side. Residues leucine 117–phenylalanine 140 traverse the membrane as a helical segment. Topologically, residues lysine 141 to serine 146 are cytoplasmic. The helical transmembrane segment at leucine 147 to isoleucine 171 threads the bilayer. Topologically, residues serine 172–asparagine 193 are periplasmic. The helical transmembrane segment at tryptophan 194–leucine 214 threads the bilayer. Residues serine 215–lysine 234 lie on the Cytoplasmic side of the membrane. Residues methionine 235 to serine 257 form a helical membrane-spanning segment. The Periplasmic portion of the chain corresponds to glycine 258 to glycine 264. Residues leucine 265 to valine 275 traverse the membrane as a helical segment. Residues glycine 276–asparagine 278 lie on the Cytoplasmic side of the membrane. A helical transmembrane segment spans residues histidine 279–leucine 304. Over serine 305 to proline 310 the chain is Periplasmic. The helical transmembrane segment at isoleucine 311–lysine 329 threads the bilayer. Residues leucine 330 to glutamate 337 lie on the Cytoplasmic side of the membrane.

Belongs to the binding-protein-dependent transport system permease family. FecCD subfamily. As to quaternary structure, the complex is composed of two ATP-binding proteins (MolC), two transmembrane proteins (MolB) and a solute-binding protein (MolA).

The protein localises to the cell inner membrane. The MolBCA complex shows a decrease in affinity in the presence of increasing concentrations of substrate and nucleotide. Part of the ABC transporter complex MolBCA involved in molybdate import. Responsible for the translocation of the substrate across the membrane. Functions as a low-affinity molybdate transporter. The chain is Molybdate import system permease protein MolB from Haemophilus influenzae (strain ATCC 51907 / DSM 11121 / KW20 / Rd).